Here is a 143-residue protein sequence, read N- to C-terminus: MSLKRTRARERALQALYQIDVAAEGIDDALSRFWKSFEPVEREVMEDAEGFVRGVAAHRRTIDDTIEGVSTNWRLDRMAKVDRNVLRLAVYELLRTDVPVKVAINEAIELGKKYGSESSGAFVNGVLDKVAAGLPPERRRTDR.

It belongs to the NusB family.

Involved in transcription antitermination. Required for transcription of ribosomal RNA (rRNA) genes. Binds specifically to the boxA antiterminator sequence of the ribosomal RNA (rrn) operons. The polypeptide is Transcription antitermination protein NusB (Anaeromyxobacter sp. (strain Fw109-5)).